A 176-amino-acid chain; its full sequence is 2-C-methyl-D-erythritol 2,4-cyclodiphosphate synthase (176 aa).

A divalent metal cation contacts are provided by Asp-23, His-25, and His-60. Residue 23 to 25 (DSH) coordinates 4-CDP-2-C-methyl-D-erythritol 2-phosphate. 149 to 152 (TSGE) provides a ligand contact to 4-CDP-2-C-methyl-D-erythritol 2-phosphate.

It belongs to the IspF family. In terms of assembly, homotrimer. It depends on a divalent metal cation as a cofactor.

The catalysed reaction is 4-CDP-2-C-methyl-D-erythritol 2-phosphate = 2-C-methyl-D-erythritol 2,4-cyclic diphosphate + CMP. It participates in isoprenoid biosynthesis; isopentenyl diphosphate biosynthesis via DXP pathway; isopentenyl diphosphate from 1-deoxy-D-xylulose 5-phosphate: step 4/6. Involved in the biosynthesis of isopentenyl diphosphate (IPP) and dimethylallyl diphosphate (DMAPP), two major building blocks of isoprenoid compounds. Catalyzes the conversion of 4-diphosphocytidyl-2-C-methyl-D-erythritol 2-phosphate (CDP-ME2P) to 2-C-methyl-D-erythritol 2,4-cyclodiphosphate (ME-CPP) with a corresponding release of cytidine 5-monophosphate (CMP). This chain is 2-C-methyl-D-erythritol 2,4-cyclodiphosphate synthase, found in Chlamydia caviae (strain ATCC VR-813 / DSM 19441 / 03DC25 / GPIC) (Chlamydophila caviae).